Reading from the N-terminus, the 271-residue chain is Tryptophan synthase alpha chain (271 aa).

Active-site proton acceptor residues include Glu49 and Asp60.

Belongs to the TrpA family. In terms of assembly, tetramer of two alpha and two beta chains.

It catalyses the reaction (1S,2R)-1-C-(indol-3-yl)glycerol 3-phosphate + L-serine = D-glyceraldehyde 3-phosphate + L-tryptophan + H2O. It participates in amino-acid biosynthesis; L-tryptophan biosynthesis; L-tryptophan from chorismate: step 5/5. In terms of biological role, the alpha subunit is responsible for the aldol cleavage of indoleglycerol phosphate to indole and glyceraldehyde 3-phosphate. This is Tryptophan synthase alpha chain from Burkholderia cenocepacia (strain HI2424).